The primary structure comprises 343 residues: Heat-inducible transcription repressor HrcA (343 aa).

Belongs to the HrcA family.

In terms of biological role, negative regulator of class I heat shock genes (grpE-dnaK-dnaJ and groELS operons). Prevents heat-shock induction of these operons. The protein is Heat-inducible transcription repressor HrcA of Natranaerobius thermophilus (strain ATCC BAA-1301 / DSM 18059 / JW/NM-WN-LF).